Reading from the N-terminus, the 374-residue chain is Putative glutamate--cysteine ligase 2 (374 aa).

The protein belongs to the glutamate--cysteine ligase type 2 family. YbdK subfamily.

The catalysed reaction is L-cysteine + L-glutamate + ATP = gamma-L-glutamyl-L-cysteine + ADP + phosphate + H(+). Its function is as follows. ATP-dependent carboxylate-amine ligase which exhibits weak glutamate--cysteine ligase activity. The polypeptide is Putative glutamate--cysteine ligase 2 (Laribacter hongkongensis (strain HLHK9)).